Here is a 125-residue protein sequence, read N- to C-terminus: Small ribosomal subunit protein uS12 (125 aa).

Aspartate 89 bears the 3-methylthioaspartic acid mark.

This sequence belongs to the universal ribosomal protein uS12 family. In terms of assembly, part of the 30S ribosomal subunit. Contacts proteins S8 and S17. May interact with IF1 in the 30S initiation complex.

With S4 and S5 plays an important role in translational accuracy. Functionally, interacts with and stabilizes bases of the 16S rRNA that are involved in tRNA selection in the A site and with the mRNA backbone. Located at the interface of the 30S and 50S subunits, it traverses the body of the 30S subunit contacting proteins on the other side and probably holding the rRNA structure together. The combined cluster of proteins S8, S12 and S17 appears to hold together the shoulder and platform of the 30S subunit. The protein is Small ribosomal subunit protein uS12 of Wigglesworthia glossinidia brevipalpis.